Here is a 223-residue protein sequence, read N- to C-terminus: Deoxyribose-phosphate aldolase (223 aa).

The Proton donor/acceptor role is filled by Asp-91. Lys-153 functions as the Schiff-base intermediate with acetaldehyde in the catalytic mechanism. Residue Lys-182 is the Proton donor/acceptor of the active site.

This sequence belongs to the DeoC/FbaB aldolase family. DeoC type 1 subfamily.

The protein localises to the cytoplasm. The catalysed reaction is 2-deoxy-D-ribose 5-phosphate = D-glyceraldehyde 3-phosphate + acetaldehyde. It functions in the pathway carbohydrate degradation; 2-deoxy-D-ribose 1-phosphate degradation; D-glyceraldehyde 3-phosphate and acetaldehyde from 2-deoxy-alpha-D-ribose 1-phosphate: step 2/2. Functionally, catalyzes a reversible aldol reaction between acetaldehyde and D-glyceraldehyde 3-phosphate to generate 2-deoxy-D-ribose 5-phosphate. The protein is Deoxyribose-phosphate aldolase of Streptococcus pyogenes serotype M4 (strain MGAS10750).